The primary structure comprises 567 residues: MIFGSRRRIRGRRGRSGPMTRGLSALSRAVAVAWRRSLQLRVVALTLGLSLAVILALGFVLTSQVTNRVLDIKVRAAIDQIERARTTVSGIVNGEETRSLDSSLQLARNTLTSKTDPASGAGLAGAFDAVLMVPGDGPRAASTAGPVDQVPNALRGFVKAGQAAYQYATVQTEGFSGPALIIGTPTLSRVANLELYLIFPLASEQATITLVRGTMATGGLVLLVLLAGIALLVSRQVVVPVRSASRIAERFAEGHLSERMPVRGEDDMARLAVSFNDMAESLSRQIAQLEEFGNLQRRFTSDVSHELRTPLTTVRMAADLIYDHSADLDPTLRRSTELMVSELDRFETLLNDLLEISRHDAGVAELSVEAVDLRTTVNNALGNVGHLAEEAGIELLVDLPAEQVIAEVDARRVERILRNLIANAIDHAEHKPVRIRMAADEDTVAVTVRDYGVGLRPGEEKLVFSRFWRSDPSRVRRSGGTGLGLAISVEDARLHQGRLEAWGEPGEGACFRLTLPLVRGHKVTTSPLPMKPIPQPVLQPVAQPNPQPMPPEYKERQRPREHAEWSG.

Residues 1 to 15 (MIFGSRRRIRGRRGR) show a composition bias toward basic residues. The disordered stretch occupies residues 1–20 (MIFGSRRRIRGRRGRSGPMT). Helical transmembrane passes span 42-62 (VVAL…FVLT) and 213-233 (GTMA…ALLV). Positions 235-287 (RQVVVPVRSASRIAERFAEGHLSERMPVRGEDDMARLAVSFNDMAESLSRQIA) constitute an HAMP domain. The region spanning 302–519 (DVSHELRTPL…CFRLTLPLVR (218 aa)) is the Histidine kinase domain. H305 is subject to Phosphohistidine; by autocatalysis. The disordered stretch occupies residues 526-567 (SPLPMKPIPQPVLQPVAQPNPQPMPPEYKERQRPREHAEWSG). Over residues 529 to 551 (PMKPIPQPVLQPVAQPNPQPMPP) the composition is skewed to pro residues. Residues 552–567 (EYKERQRPREHAEWSG) are compositionally biased toward basic and acidic residues.

It is found in the cell membrane. The enzyme catalyses ATP + protein L-histidine = ADP + protein N-phospho-L-histidine.. In terms of biological role, member of the two-component regulatory system MtrA/MtrB. Seems to function as a membrane-associated protein kinase that phosphorylates MtrA in response to environmental signals. The chain is Sensor histidine kinase MtrB (mtrB) from Mycobacterium bovis (strain ATCC BAA-935 / AF2122/97).